The sequence spans 608 residues: Serine/arginine repetitive matrix protein 4 (608 aa).

2 disordered regions span residues 34 to 246 (ASIT…PLPR) and 261 to 608 (SAAD…STRR). Over residues 78-100 (GREKACRELDPARAHSASQDRDP) the composition is skewed to basic and acidic residues. Composition is skewed to basic residues over residues 107–123 (RGKK…RRRS) and 131–187 (VKKK…HRCP). Residues 188-200 (SRSQSSELRSPSC) are compositionally biased toward low complexity. The span at 201–213 (ESRHRGRSPEEGR) shows a compositional bias: basic and acidic residues. A compositionally biased stretch (basic residues) spans 214–228 (KSRRTHSRRCSKNHC). The segment covering 289–299 (TSSPPSTQTSS) has biased composition (low complexity). Residues 322–339 (CGNTSDSGNSFTTSSPQN) show a composition bias toward polar residues. Low complexity-rich tracts occupy residues 389-420 (RSSS…SRST) and 428-459 (SRSP…SRYS). Positions 460–477 (PSRERDLKYGEKEPQPRE) are enriched in basic and acidic residues. The segment covering 478–494 (RARRRRRSYSPMRKRRR) has biased composition (basic residues). Basic and acidic residues predominate over residues 495-504 (DSPSHLEARR). Residues 518-555 (PSPSSSSSLSSASSWYSSSSSSSSSSSRSPSRSYSRSR) are compositionally biased toward low complexity. Positions 556–573 (SPSRSHSSRSQTRSRTRT) are enriched in basic residues. The span at 574–608 (SRSSSSRSLSLGSRSRSRNRSLSYSSAESYASTRR) shows a compositional bias: low complexity.

Belongs to the nSR100 family. Phosphorylated. In terms of tissue distribution, specifically expressed in neuronal cells (at protein level). Expressed in adult nervous system and sensory organ tissues.

It is found in the nucleus. Functionally, splicing factor specifically required for neural cell differentiation. Acts in conjunction with nPTB/PTBP2 by binding directly to its regulated target transcripts and promotes neural-specific exon inclusion in many genes that function in neural cell differentiation. Required to promote the inclusion of neural-specific exon 10 in nPTB/PTBP2, leading to increased expression of neural-specific nPTB/PTBP2. Also promotes the inclusion of exon 16 in DAAM1 in neuron extracts. Promotes alternative splicing of REST transcripts to produce REST isoform 2 (REST4) with greatly reduced repressive activity, thereby activating expression of REST targets in neural cells. Plays an important role during embryonic development as well as in the proper functioning of the adult nervous system. Regulates alternative splicing events in genes with important neuronal functions. This Mus musculus (Mouse) protein is Serine/arginine repetitive matrix protein 4 (Srrm4).